The following is a 362-amino-acid chain: E3 ubiquitin-protein ligase TM129 (362 aa).

Topologically, residues 1-6 (MDSPEV) are lumenal. Residues 7–27 (TFTLAYLVFAVCFVFTPNEFY) form a helical membrane-spanning segment. The Cytoplasmic segment spans residues 28–56 (SAGLTVQNLLSGWLGSEDAAFVPYHLRRT). Residues 57–77 (SATLLCHSLLPLGYYMGMCFA) traverse the membrane as a helical segment. The Lumenal segment spans residues 78 to 94 (ASEKQLYSPGQAPEAWQ). The helical transmembrane segment at 95-115 (LFLLLAVTLPLLSCTLIYYWS) threads the bilayer. The Cytoplasmic portion of the chain corresponds to 116 to 362 (WDRWTRHPLA…FCILDVCCVR (247 aa)). The RING-type; degenerate zinc finger occupies 285 to 350 (CIGCMQTRAS…ASRVPCPTCR (66 aa)).

This sequence belongs to the TMEM129 family. In terms of assembly, integral component of ER-resident dislocation complexes.

The protein localises to the endoplasmic reticulum membrane. It carries out the reaction S-ubiquitinyl-[E2 ubiquitin-conjugating enzyme]-L-cysteine + [acceptor protein]-L-lysine = [E2 ubiquitin-conjugating enzyme]-L-cysteine + N(6)-ubiquitinyl-[acceptor protein]-L-lysine.. It participates in protein modification; protein ubiquitination. E3 ubiquitin-protein ligase involved in ER-associated protein degradation, preferentially associates with the E2 enzyme UBE2J2. Exploited by viral US11 proteins to mediate HLA class I proteins degradation. In Mus musculus (Mouse), this protein is E3 ubiquitin-protein ligase TM129 (Tmem129).